The chain runs to 38 residues: Large ribosomal subunit protein bL36 (38 aa).

Belongs to the bacterial ribosomal protein bL36 family.

The protein is Large ribosomal subunit protein bL36 of Pseudomonas entomophila (strain L48).